Consider the following 340-residue polypeptide: Guanine nucleotide-binding protein G(I)/G(S)/G(T) subunit beta-1 (340 aa).

WD repeat units follow at residues 53–83, 95–125, 141–170, 182–212, 224–254, 268–298, and 310–340; these read GHLA…IVWD, LRSS…SIYS, GHTG…ALWD, GHTG…KLWD, GHES…RLFD, NIIC…NVWD, and GHDN…KIWN.

The protein belongs to the WD repeat G protein beta family. As to quaternary structure, g proteins are composed of 3 units, alpha, beta and gamma.

Guanine nucleotide-binding proteins (G proteins) are involved as a modulator or transducer in various transmembrane signaling systems. The beta and gamma chains are required for the GTPase activity, for replacement of GDP by GTP, and for G protein-effector interaction. In Homarus americanus (American lobster), this protein is Guanine nucleotide-binding protein G(I)/G(S)/G(T) subunit beta-1 (GBETA1).